We begin with the raw amino-acid sequence, 275 residues long: Large ribosomal subunit protein uL2c (275 aa).

Disordered regions lie at residues 32 to 53 (SLSK…TCRH) and 218 to 242 (PTVR…APIG).

This sequence belongs to the universal ribosomal protein uL2 family. In terms of assembly, part of the 50S ribosomal subunit.

The protein resides in the plastid. The protein localises to the chloroplast. The sequence is that of Large ribosomal subunit protein uL2c (rpl2) from Tetradesmus obliquus (Green alga).